A 181-amino-acid polypeptide reads, in one-letter code: Adenylyl-sulfate kinase (181 aa).

12–19 (GLSGAGKS) is an ATP binding site. The active-site Phosphoserine intermediate is Ser-86.

It belongs to the APS kinase family.

It catalyses the reaction adenosine 5'-phosphosulfate + ATP = 3'-phosphoadenylyl sulfate + ADP + H(+). The protein operates within sulfur metabolism; hydrogen sulfide biosynthesis; sulfite from sulfate: step 2/3. Functionally, catalyzes the synthesis of activated sulfate. This is Adenylyl-sulfate kinase from Microcystis aeruginosa (strain NIES-843 / IAM M-2473).